The chain runs to 428 residues: GTPase Obg (428 aa).

The Obg domain occupies 1 to 158 (MFIDEVIITV…IKVKLELKLL (158 aa)). One can recognise an OBG-type G domain in the interval 159–330 (ADVALVGYPS…ILYKTYDMLS (172 aa)). GTP contacts are provided by residues 165–172 (GYPSVGKS), 190–194 (FTTLE), 212–215 (DIPG), 282–285 (NKMD), and 311–313 (SVL). Serine 172 and threonine 192 together coordinate Mg(2+). The 80-residue stretch at 349-428 (ELKIEKEDFE…IADVEFEYFE (80 aa)) folds into the OCT domain.

It belongs to the TRAFAC class OBG-HflX-like GTPase superfamily. OBG GTPase family. In terms of assembly, monomer. The cofactor is Mg(2+).

The protein resides in the cytoplasm. An essential GTPase which binds GTP, GDP and possibly (p)ppGpp with moderate affinity, with high nucleotide exchange rates and a fairly low GTP hydrolysis rate. Plays a role in control of the cell cycle, stress response, ribosome biogenesis and in those bacteria that undergo differentiation, in morphogenesis control. In Fusobacterium nucleatum subsp. nucleatum (strain ATCC 25586 / DSM 15643 / BCRC 10681 / CIP 101130 / JCM 8532 / KCTC 2640 / LMG 13131 / VPI 4355), this protein is GTPase Obg.